The following is a 969-amino-acid chain: Protein translocase subunit SecA (969 aa).

ATP is bound by residues Gln-99, 117 to 121, and Asp-631; that span reads GEGKT.

The protein belongs to the SecA family. As to quaternary structure, monomer and homodimer. Part of the essential Sec protein translocation apparatus which comprises SecA, SecYEG and auxiliary proteins SecDF. Other proteins may also be involved.

Its subcellular location is the cell inner membrane. The protein localises to the cytoplasm. The catalysed reaction is ATP + H2O + cellular proteinSide 1 = ADP + phosphate + cellular proteinSide 2.. Its function is as follows. Part of the Sec protein translocase complex. Interacts with the SecYEG preprotein conducting channel. Has a central role in coupling the hydrolysis of ATP to the transfer of proteins into and across the cell membrane, serving as an ATP-driven molecular motor driving the stepwise translocation of polypeptide chains across the membrane. The polypeptide is Protein translocase subunit SecA (Chlamydia trachomatis serovar D (strain ATCC VR-885 / DSM 19411 / UW-3/Cx)).